The sequence spans 712 residues: Polyribonucleotide nucleotidyltransferase (712 aa).

Positions 487 and 493 each coordinate Mg(2+). A KH domain is found at 554-613; that stretch reads PKIITMTINPDKIRDVIGPSGKQINKIIEETGVKIDIEQDGTVFISSINQEMNDKAKKII. Positions 623–691 constitute an S1 motif domain; sequence GEIYEGKVKR…KQGRVNLSRK (69 aa).

This sequence belongs to the polyribonucleotide nucleotidyltransferase family. It depends on Mg(2+) as a cofactor.

The protein localises to the cytoplasm. It carries out the reaction RNA(n+1) + phosphate = RNA(n) + a ribonucleoside 5'-diphosphate. Its function is as follows. Involved in mRNA degradation. Catalyzes the phosphorolysis of single-stranded polyribonucleotides processively in the 3'- to 5'-direction. This chain is Polyribonucleotide nucleotidyltransferase, found in Bacillus anthracis.